Here is a 140-residue protein sequence, read N- to C-terminus: Probable glycine cleavage system H protein (140 aa).

Residues 22–114 (RAIIGITSYA…YEEGWIVVLE (93 aa)) form the Lipoyl-binding domain. An N6-lipoyllysine modification is found at Lys63.

The protein belongs to the GcvH family. The glycine cleavage system is composed of four proteins: P, T, L and H. The cofactor is (R)-lipoate.

Functionally, the glycine cleavage system catalyzes the degradation of glycine. The H protein shuttles the methylamine group of glycine from the P protein to the T protein. The chain is Probable glycine cleavage system H protein from Korarchaeum cryptofilum (strain OPF8).